The sequence spans 914 residues: Ral guanine nucleotide dissociation stimulator (914 aa).

An N-terminal Ras-GEF domain is found at 112 to 249; sequence KVRTVKAGTL…RAHLLLAQLE (138 aa). The segment at 280–365 is disordered; that stretch reads ARAPSPVPAP…APVPSLQPSW (86 aa). The segment covering 282–300 has biased composition (pro residues); that stretch reads APSPVPAPAPEPEPAPTPA. Low complexity predominate over residues 304 to 338; that stretch reads ELEVAPAPAPELQQAPEPAVGLESAPAPALELEPA. Positions 386 to 648 constitute a Ras-GEF domain; the sequence is PPDLVAEQFT…YNLSCELEPP (263 aa). Disordered stretches follow at residues 666 to 689 and 728 to 776; these read KRWS…SKSC and PESP…RTHK. Low complexity-rich tracts occupy residues 675-686 and 745-772; these read STELSTSGSSHS and SSPE…VAAT. The region spanning 798–885 is the Ras-associating domain; that stretch reads DCCIIRVSLD…YDFVLKKRTF (88 aa). Y814 is subject to Phosphotyrosine; by MET.

In terms of assembly, interacts with RIT1 and RIT2. Interacts with OOG1. Interacts with TRAF3. Interacts with HRAS. In terms of processing, phosphorylation of Tyr-814 by MET blocks HRAS binding.

Its subcellular location is the cytoplasm. It localises to the nucleus. In terms of biological role, functions as a guanine nucleotide exchange factor (GEF) activating either RalA or RalB GTPases and plays an important role in intracellular transport. Interacts and acts as an effector molecule for R-Ras, H-Ras, K-Ras, and Rap. During bacterial clearance, recognizes 'Lys-33'-linked polyubiquitinated TRAF3 and subsequently mediates assembly of the exocyst complex. In Homo sapiens (Human), this protein is Ral guanine nucleotide dissociation stimulator (RALGDS).